The primary structure comprises 263 residues: Phosphatidylglycerol--prolipoprotein diacylglyceryl transferase (263 aa).

Transmembrane regions (helical) follow at residues 16–36 (LAVSWYSLSYVVGILFGWFYA), 55–75 (FVTYAIIGIIVGGRLGYILLY), 92–112 (EGGMSFHGGAIGVIIAAYIFC), and 117–137 (LNFLSLTDIIAPVVPIGLFFG). Residue R138 coordinates a 1,2-diacyl-sn-glycero-3-phospho-(1'-sn-glycerol). Transmembrane regions (helical) follow at residues 172-192 (QLYEAFFEGLVLFCILAYAVF), 201-221 (GLNSGLFLMFYSLFRIIIEIF), and 234-254 (SLTMGQILSMPLLLLGIYLII).

This sequence belongs to the Lgt family.

Its subcellular location is the cell inner membrane. It carries out the reaction L-cysteinyl-[prolipoprotein] + a 1,2-diacyl-sn-glycero-3-phospho-(1'-sn-glycerol) = an S-1,2-diacyl-sn-glyceryl-L-cysteinyl-[prolipoprotein] + sn-glycerol 1-phosphate + H(+). It functions in the pathway protein modification; lipoprotein biosynthesis (diacylglyceryl transfer). In terms of biological role, catalyzes the transfer of the diacylglyceryl group from phosphatidylglycerol to the sulfhydryl group of the N-terminal cysteine of a prolipoprotein, the first step in the formation of mature lipoproteins. This is Phosphatidylglycerol--prolipoprotein diacylglyceryl transferase from Rickettsia bellii (strain OSU 85-389).